A 625-amino-acid chain; its full sequence is Mitochondrial Rho GTPase 1 (625 aa).

Over 1–601 the chain is Cytoplasmic; it reads MSDDETLADV…LRRVFYLNDS (601 aa). The Miro 1 domain occupies 3-170; that stretch reads DDETLADVRI…EIFYYAQKAV (168 aa). GTP-binding positions include 16–23, 62–66, and 123–126; these read GDEGCGKT, DLSIK, and NKSD. EF-hand domains lie at 188–223 and 308–343; these read RARKALIRVFKICDRDNDGYLSDTELNDFQKLCFGI and EGVQFVSALFEKYDEDKDGCLSPSELQNLFSVCPVP. Ca(2+) is bound by residues Asp201, Asp203, Asp205, Tyr207, Glu212, Asp321, Asp323, Asp325, Cys327, and Glu332. The 206-residue stretch at 420-625 folds into the Miro 2 domain; sequence HGTDRKVFQC…LAGFLVLKNL (206 aa). GTP contacts are provided by residues 433-440, 470-474, and 537-540; these read GAKDAGKT, RVKEE, and TKVE. A helical; Anchor for type IV membrane protein transmembrane segment spans residues 602–622; sequence NLLSKITFGAAIVALAGFLVL. The Mitochondrial intermembrane portion of the chain corresponds to 623–625; that stretch reads KNL.

This sequence belongs to the mitochondrial Rho GTPase family.

It localises to the mitochondrion outer membrane. Functionally, mitochondrial GTPase involved in mitochondrial trafficking. Probably involved in control of anterograde transport of mitochondria and their subcellular distribution. Plays a role in maintaining mitochondrial morphology. The polypeptide is Mitochondrial Rho GTPase 1 (Caenorhabditis elegans).